Consider the following 1368-residue polypeptide: DNA-directed RNA polymerase subunit beta (1368 aa).

This sequence belongs to the RNA polymerase beta chain family. As to quaternary structure, the RNAP catalytic core consists of 2 alpha, 1 beta, 1 beta' and 1 omega subunit. When a sigma factor is associated with the core the holoenzyme is formed, which can initiate transcription.

It catalyses the reaction RNA(n) + a ribonucleoside 5'-triphosphate = RNA(n+1) + diphosphate. In terms of biological role, DNA-dependent RNA polymerase catalyzes the transcription of DNA into RNA using the four ribonucleoside triphosphates as substrates. This chain is DNA-directed RNA polymerase subunit beta, found in Syntrophotalea carbinolica (strain DSM 2380 / NBRC 103641 / GraBd1) (Pelobacter carbinolicus).